Reading from the N-terminus, the 127-residue chain is Aspartate 1-decarboxylase (127 aa).

The active-site Schiff-base intermediate with substrate; via pyruvic acid is Ser25. At Ser25 the chain carries Pyruvic acid (Ser). Thr57 contacts substrate. The Proton donor role is filled by Tyr58. Residue 73–75 (GAA) participates in substrate binding.

It belongs to the PanD family. In terms of assembly, heterooctamer of four alpha and four beta subunits. Requires pyruvate as cofactor. In terms of processing, is synthesized initially as an inactive proenzyme, which is activated by self-cleavage at a specific serine bond to produce a beta-subunit with a hydroxyl group at its C-terminus and an alpha-subunit with a pyruvoyl group at its N-terminus.

The protein localises to the cytoplasm. It carries out the reaction L-aspartate + H(+) = beta-alanine + CO2. The protein operates within cofactor biosynthesis; (R)-pantothenate biosynthesis; beta-alanine from L-aspartate: step 1/1. Catalyzes the pyruvoyl-dependent decarboxylation of aspartate to produce beta-alanine. This chain is Aspartate 1-decarboxylase, found in Clostridium botulinum (strain Loch Maree / Type A3).